Here is a 258-residue protein sequence, read N- to C-terminus: 4-oxalmesaconate hydratase (258 aa).

Residues His28, Asp31, and His141 each coordinate Zn(2+).

This sequence belongs to the MshB deacetylase family. It depends on Zn(2+) as a cofactor.

The enzyme catalyses 2-hydroxy-4-oxobutane-1,2,4-tricarboxylate = 4-carboxy-2-hydroxy-cis,cis-muconate + H2O. Catalyzes the conversion of oxalomesaconic acid enol (OMAenol) to 4-carboxy-4-hydroxy-2-oxoadipic acid (CHA). Mediates the third step of gallate degradation pathway. The chain is 4-oxalmesaconate hydratase (galB) from Pseudomonas putida (strain ATCC 47054 / DSM 6125 / CFBP 8728 / NCIMB 11950 / KT2440).